A 155-amino-acid chain; its full sequence is Cytochrome c-type biogenesis protein CcmE (155 aa).

Residues 1-8 (MNPIRKKR) are Cytoplasmic-facing. Residues 9 to 29 (LYWILALLCGVSIAMALALSA) form a helical; Signal-anchor for type II membrane protein membrane-spanning segment. Over 30-155 (LQENINLFYT…PKRVKQESTR (126 aa)) the chain is Periplasmic. Heme is bound by residues His-124 and Tyr-128.

Belongs to the CcmE/CycJ family.

The protein resides in the cell inner membrane. Its function is as follows. Heme chaperone required for the biogenesis of c-type cytochromes. Transiently binds heme delivered by CcmC and transfers the heme to apo-cytochromes in a process facilitated by CcmF and CcmH. This Janthinobacterium sp. (strain Marseille) (Minibacterium massiliensis) protein is Cytochrome c-type biogenesis protein CcmE.